A 431-amino-acid polypeptide reads, in one-letter code: O-phosphoseryl-tRNA(Sec) selenium transferase (431 aa).

A tetramerization region spans residues 1–36 (MRGLIPDHMLERGRTVLDSYREPVERLLSERRMPEE). Arginine 67 contacts pyridoxal 5'-phosphate. The segment at 88-98 (GRSGTLVDPQP) is phosphate loop (P-loop). Positions 89, 90, and 97 each coordinate substrate. Lysine 269 carries the post-translational modification N6-(pyridoxal phosphate)lysine. Arginine 298 serves as a coordination point for substrate.

Belongs to the SepSecS family. As to quaternary structure, homotetramer. Requires pyridoxal 5'-phosphate as cofactor.

The catalysed reaction is O-phospho-L-seryl-tRNA(Sec) + selenophosphate + H2O = L-selenocysteinyl-tRNA(Sec) + 2 phosphate. It functions in the pathway aminoacyl-tRNA biosynthesis; selenocysteinyl-tRNA(Sec) biosynthesis; selenocysteinyl-tRNA(Sec) from L-seryl-tRNA(Sec) (archaeal/eukaryal route): step 2/2. Its function is as follows. Converts O-phosphoseryl-tRNA(Sec) to selenocysteinyl-tRNA(Sec) required for selenoprotein biosynthesis. This chain is O-phosphoseryl-tRNA(Sec) selenium transferase (spcS), found in Methanopyrus kandleri (strain AV19 / DSM 6324 / JCM 9639 / NBRC 100938).